Here is a 183-residue protein sequence, read N- to C-terminus: Peptide deformylase (183 aa).

Fe cation contacts are provided by cysteine 110 and histidine 153. Glutamate 154 is an active-site residue. Histidine 157 is a binding site for Fe cation.

The protein belongs to the polypeptide deformylase family. Fe(2+) serves as cofactor.

It catalyses the reaction N-terminal N-formyl-L-methionyl-[peptide] + H2O = N-terminal L-methionyl-[peptide] + formate. Its function is as follows. Removes the formyl group from the N-terminal Met of newly synthesized proteins. Requires at least a dipeptide for an efficient rate of reaction. N-terminal L-methionine is a prerequisite for activity but the enzyme has broad specificity at other positions. This Oceanobacillus iheyensis (strain DSM 14371 / CIP 107618 / JCM 11309 / KCTC 3954 / HTE831) protein is Peptide deformylase.